The following is a 644-amino-acid chain: Tubulin--tyrosine ligase-like protein 12 (644 aa).

A compositionally biased stretch (basic and acidic residues) spans 1–13 (MEAERGPERRPAE). The segment at 1–25 (MEAERGPERRPAERSSPGQTPEEGA) is disordered. Positions 300–644 (PHGHIFKVYT…PGGCHVTCLV (345 aa)) constitute a TTL domain. ATP-binding positions include 450–453 (SKYI), Lys468, and Asp470.

This sequence belongs to the tubulin--tyrosine ligase family. As to quaternary structure, interacts with MAVS; the interaction prevents MAVS binding to TBK1 and IKBKE. Interacts (via N-terminus) with TBK1 (via protein kinase domain). Interacts (via TTL domain) with IKBKE (via protein kinase domain). Interacts with tubulin alpha. Interacts with histone H3 and histone H4 (when trimethylated at 'Lys-20' (H4K20me3)). Interacts with CBX3. In terms of tissue distribution, expressed in the basal layer of prostate and endothelial cells. Increased expression in prostatic intraepithelial neoplasia and metastatic lesions.

It is found in the cytoplasm. It localises to the midbody. The protein localises to the cytoskeleton. Its subcellular location is the microtubule organizing center. The protein resides in the centrosome. It is found in the spindle. It localises to the nucleus. Its function is as follows. Negatively regulates post-translational modifications of tubulin, including detyrosination of the C-terminus and polyglutamylation of glutamate residues. Also, indirectly promotes histone H4 trimethylation at 'Lys-20' (H4K20me3). Probably by controlling tubulin and/or histone H4 post-translational modifications, plays a role in mitosis and in maintaining chromosome number stability. During RNA virus-mediated infection, acts as a negative regulator of the RIG-I pathway by preventing MAVS binding to TBK1 and IKBKE. In Homo sapiens (Human), this protein is Tubulin--tyrosine ligase-like protein 12 (TTLL12).